The primary structure comprises 550 residues: Ribosomal large subunit pseudouridine synthase B (550 aa).

In terms of domain architecture, S4 RNA-binding spans 28–97 (ERLHKVLAQA…PSRVLIYNKP (70 aa)). The active-site Nucleophile is Asp132. Residues 294–550 (KSTVHVSRDG…RPPGGGNRGR (257 aa)) are disordered. Over residues 317-334 (DEGRELRRFDNLREDRGR) the composition is skewed to basic and acidic residues. 3 stretches are compositionally biased toward gly residues: residues 420–451 (GPGGARPGTGGPVGARSGGPGRGAGGGQGQSQ), 490–501 (PSGGRPGPGGNR), and 509–550 (GPGG…NRGR).

The protein belongs to the pseudouridine synthase RsuA family.

It catalyses the reaction uridine(2605) in 23S rRNA = pseudouridine(2605) in 23S rRNA. Functionally, responsible for synthesis of pseudouridine from uracil-2605 in 23S ribosomal RNA. The protein is Ribosomal large subunit pseudouridine synthase B (rluB) of Xanthomonas axonopodis pv. citri (strain 306).